The primary structure comprises 158 residues: Transcriptional regulator MraZ (158 aa).

2 consecutive SpoVT-AbrB domains span residues 7 to 57 (THQN…PTAA) and 86 to 129 (AYPV…EPAA). A disordered region spans residues 133-158 (RRAEARTRSRQLALPAQGRRQGGADA).

This sequence belongs to the MraZ family. Forms oligomers.

It is found in the cytoplasm. It localises to the nucleoid. The sequence is that of Transcriptional regulator MraZ from Gluconacetobacter diazotrophicus (strain ATCC 49037 / DSM 5601 / CCUG 37298 / CIP 103539 / LMG 7603 / PAl5).